We begin with the raw amino-acid sequence, 500 residues long: Neuronal pentraxin receptor (500 aa).

Residues 1–2 (MK) are Cytoplasmic-facing. The helical; Signal-anchor for type II membrane protein transmembrane segment at 3–23 (FLAVLLAAGMLAFLGAVICII) threads the bilayer. Over 24–500 (ASVPLAASPA…FDVCKGRAKA (477 aa)) the chain is Extracellular. An N-linked (GlcNAc...) asparagine glycan is attached at N42. A compositionally biased stretch (low complexity) spans 42 to 63 (NASVASGAAASPGPQRSLSALH). 2 disordered regions span residues 42–81 (NASV…PAAS) and 162–183 (ESGL…ADGP). The N-linked (GlcNAc...) asparagine glycan is linked to N216. A Pentraxin (PTX) domain is found at 292-494 (DAFKISIPIR…GATKAAFDVC (203 aa)). A disulfide bridge connects residues C322 and C383. Ca(2+) is bound by residues N347, E425, Q426, D427, and Q437. N463 carries an N-linked (GlcNAc...) asparagine glycan.

Heteropentamer with NPTX1 and/or NPTX2. Also binds taipoxin-associated calcium-binding protein 49 (TCBP49/RCN2). Interacts with KLHL2. Ca(2+) serves as cofactor. Ubiquitinated by a cullin-RING-based BCR (BTB-CUL3-RBX1) E3 ubiquitin-protein ligase complex containing KLHL2.

The protein localises to the membrane. Functionally, may be involved in mediating uptake of synaptic material during synapse remodeling or in mediating the synaptic clustering of AMPA glutamate receptors at a subset of excitatory synapses. The sequence is that of Neuronal pentraxin receptor (NPTXR) from Homo sapiens (Human).